Reading from the N-terminus, the 351-residue chain is dTDP-glucose 4,6-dehydratase (351 aa).

Residues 12–13, 32–35, 58–59, 80–84, and T99 contribute to the NAD(+) site; these read FI, DALT, DI, and FAAES. A substrate-binding site is contributed by S84. T133 lines the substrate pocket. D134 functions as the Proton donor in the catalytic mechanism. Catalysis depends on proton acceptor residues E135 and Y158. 158-162 is an NAD(+) binding site; the sequence is YSASK. N187 contributes to the substrate binding site. Residue N188 participates in NAD(+) binding. Residues 197–198, 213–215, R222, N257, and 289–293 contribute to the substrate site; these read KL, PVY, and DRPGH.

This sequence belongs to the NAD(P)-dependent epimerase/dehydratase family. dTDP-glucose dehydratase subfamily. As to quaternary structure, homodimer. Requires NAD(+) as cofactor.

It catalyses the reaction dTDP-alpha-D-glucose = dTDP-4-dehydro-6-deoxy-alpha-D-glucose + H2O. The protein operates within carbohydrate biosynthesis; dTDP-L-rhamnose biosynthesis. It functions in the pathway bacterial outer membrane biogenesis; LPS O-antigen biosynthesis. In terms of biological role, catalyzes the dehydration of dTDP-D-glucose to form dTDP-6-deoxy-D-xylo-4-hexulose via a three-step process involving oxidation, dehydration and reduction. The chain is dTDP-glucose 4,6-dehydratase (rfbB) from Xanthomonas campestris pv. campestris (strain ATCC 33913 / DSM 3586 / NCPPB 528 / LMG 568 / P 25).